A 260-amino-acid chain; its full sequence is Small ribosomal subunit protein uS3 (260 aa).

The KH type-2 domain occupies 39–114; sequence LRQYIEQKLG…QIRINVVEVQ (76 aa). Positions 217–260 are disordered; sequence GQEPDPLPPASRDRERDPRDRDREPRRRQQQRRRQQFEDRSNEG. Composition is skewed to basic and acidic residues over residues 227 to 243 and 251 to 260; these read SRDR…EPRR and QQFEDRSNEG.

It belongs to the universal ribosomal protein uS3 family. Part of the 30S ribosomal subunit. Forms a tight complex with proteins S10 and S14.

Functionally, binds the lower part of the 30S subunit head. Binds mRNA in the 70S ribosome, positioning it for translation. The polypeptide is Small ribosomal subunit protein uS3 (Nostoc punctiforme (strain ATCC 29133 / PCC 73102)).